The chain runs to 744 residues: NAD(P)H-quinone oxidoreductase subunit 5, chloroplastic (744 aa).

16 consecutive transmembrane segments (helical) span residues 9–29 (WIIPFLPLPVPMLIGLGLFLF), 40–60 (WAFQSVLLLSIVMIFSMNLSI), 89–109 (IDPLTSIMSILITTVGILVLI), 125–145 (FVYMSFFSTSMLGLVTSSNLI), 147–167 (IYIFWELVGICSYLLIGFWFT), 185–205 (GDFGLLLGILGFYWITGSFEF), 219–239 (NEVNFLFVTLCAVLLFAGAIA), 258–278 (TPISALIHAATMVAAGIFLVA), 290–312 (IMNFISLIGIITVFLGATLALAQ), 327–347 (LGYMMLALGMGSYRSALFHLI), 354–374 (ALLFLGSGSVIHSMETLVGYC), 396–416 (TSFLLGTLSLCGIPPLACFWS), 425–445 (WLYSPIFAIIAWSTAGLTAFY), 549–569 (LFPILILVLFTLFVGFLGIPF), 608–628 (VFSVSISSFGIFIAFFLYKPV), and 724–744 (YLFFYFSYVSIFLLIYYFLNF).

This sequence belongs to the complex I subunit 5 family. In terms of assembly, NDH is composed of at least 16 different subunits, 5 of which are encoded in the nucleus.

Its subcellular location is the plastid. It is found in the chloroplast thylakoid membrane. It catalyses the reaction a plastoquinone + NADH + (n+1) H(+)(in) = a plastoquinol + NAD(+) + n H(+)(out). It carries out the reaction a plastoquinone + NADPH + (n+1) H(+)(in) = a plastoquinol + NADP(+) + n H(+)(out). NDH shuttles electrons from NAD(P)H:plastoquinone, via FMN and iron-sulfur (Fe-S) centers, to quinones in the photosynthetic chain and possibly in a chloroplast respiratory chain. The immediate electron acceptor for the enzyme in this species is believed to be plastoquinone. Couples the redox reaction to proton translocation, and thus conserves the redox energy in a proton gradient. The polypeptide is NAD(P)H-quinone oxidoreductase subunit 5, chloroplastic (ndhF) (Mutisia acuminata).